Reading from the N-terminus, the 507-residue chain is Maturase K (507 aa).

The protein belongs to the intron maturase 2 family. MatK subfamily.

It is found in the plastid. The protein resides in the chloroplast. Its function is as follows. Usually encoded in the trnK tRNA gene intron. Probably assists in splicing its own and other chloroplast group II introns. This chain is Maturase K, found in Lens culinaris (Lentil).